We begin with the raw amino-acid sequence, 240 residues long: HTH-type transcriptional repressor STM4068 (240 aa).

An HTH gntR-type domain is found at 9–77 (TPLYKQLFFI…RGSGSVVCSV (69 aa)). Positions 37 to 56 (QKEIARSYNVSLIVVKQAWS) form a DNA-binding region, H-T-H motif.

Represses the expression of the STM4065-STM4067 operon. The chain is HTH-type transcriptional repressor STM4068 from Salmonella typhimurium (strain LT2 / SGSC1412 / ATCC 700720).